The chain runs to 521 residues: Cyclic AMP-responsive element-binding protein 3-like protein 2 (521 aa).

Residues 1–378 (MEVLESGEQS…CKLAGTQTGT (378 aa)) lie on the Cytoplasmic side of the membrane. A Phosphoserine modification is found at S93. K178 participates in a covalent cross-link: Glycyl lysine isopeptide (Lys-Gly) (interchain with G-Cter in SUMO2). S191 carries the phosphoserine modification. Residues 196–264 (SVDQLHLPPT…PHKLQGSGPL (69 aa)) are disordered. Residues 208-220 (SSHSSDSEGSLSP) show a composition bias toward low complexity. The bZIP domain occupies 294–357 (ALKKIRRKIK…RTLLQQLQKL (64 aa)). The interval 296–325 (KKIRRKIKNKISAQESRRKKKEYMDSLEKK) is basic motif. The leucine-zipper stretch occupies residues 336–357 (LRKKVEVLENTNRTLLQQLQKL). Residues 379–399 (CLMVVVLCFAVAFGSLFQGYG) form a helical; Signal-anchor for type II membrane protein membrane-spanning segment. Topologically, residues 400–521 (LYPSATKMAL…ELERRVNATF (122 aa)) are lumenal. Residues 427–430 (RNLL) carry the S1P recognition motif. N505 and N518 each carry an N-linked (GlcNAc...) asparagine glycan.

It belongs to the bZIP family. ATF subfamily. Binds DNA as a dimer. Upon ER stress, translocated to the Golgi apparatus, where it is processed by regulated intramembrane proteolysis (RIP) to release the cytosol-facing N-terminal transcription factor domain. The cleavage is performed sequentially by site-1 and site-2 proteases (S1P/MBTPS1 and S2P/MBTPS2). Post-translationally, N-glycosylated. In terms of processing, ubiquitinated by HRD1/SYVN1; undergoes 'Lys-48'-linked ubiquitination, followed by rapid proteasomal degradation under normal conditions. Upon ER stress, SYVN1 E3 ubiquitin-protein ligase dissociates from its substrate, ubiquitination does not occur and CREB3L2 is stabilized.

The protein resides in the endoplasmic reticulum membrane. The protein localises to the nucleus. Functionally, transcription factor involved in unfolded protein response (UPR). In the absence of endoplasmic reticulum (ER) stress, inserted into ER membranes, with N-terminal DNA-binding and transcription activation domains oriented toward the cytosolic face of the membrane. In response to ER stress, transported to the Golgi, where it is cleaved in a site-specific manner by resident proteases S1P/MBTPS1 and S2P/MBTPS2. The released N-terminal cytosolic domain is translocated to the nucleus to effect transcription of specific target genes. Plays a critical role in chondrogenesis by activating the transcription of SEC23A, which promotes the transport and secretion of cartilage matrix proteins, and possibly that of ER biogenesis-related genes. In a neuroblastoma cell line, protects cells from ER stress-induced death. In vitro activates transcription of target genes via direct binding to the CRE site. In Rattus norvegicus (Rat), this protein is Cyclic AMP-responsive element-binding protein 3-like protein 2 (Creb3l2).